Here is a 100-residue protein sequence, read N- to C-terminus: NADH-quinone oxidoreductase subunit K 2 (100 aa).

A run of 3 helical transmembrane segments spans residues 4 to 24 (LWWH…GVLL), 28 to 48 (ILVV…NFIA), and 60 to 80 (IFAI…LGIL).

The protein belongs to the complex I subunit 4L family. In terms of assembly, NDH-1 is composed of 14 different subunits. Subunits NuoA, H, J, K, L, M, N constitute the membrane sector of the complex.

The protein localises to the cell inner membrane. The enzyme catalyses a quinone + NADH + 5 H(+)(in) = a quinol + NAD(+) + 4 H(+)(out). Functionally, NDH-1 shuttles electrons from NADH, via FMN and iron-sulfur (Fe-S) centers, to quinones in the respiratory chain. The immediate electron acceptor for the enzyme in this species is believed to be ubiquinone. Couples the redox reaction to proton translocation (for every two electrons transferred, four hydrogen ions are translocated across the cytoplasmic membrane), and thus conserves the redox energy in a proton gradient. The polypeptide is NADH-quinone oxidoreductase subunit K 2 (Sinorhizobium fredii (strain NBRC 101917 / NGR234)).